Reading from the N-terminus, the 206-residue chain is CMP-5'-(N-acetyl-N-hydroxy-3-aminopropyl)phosphonate hydrolase (206 aa).

The region spanning 37–166 is the Nudix hydrolase domain; the sequence is VRAPGAAIIV…RTVTSGTAIG (130 aa). A Nudix box motif is present at residues 74-95; sequence GLVDDREDPAVTAAREAEEETG. Low complexity predominate over residues 177 to 194; that stretch reads RQQPGGVQEQPGGAQQQG. The tract at residues 177–206 is disordered; the sequence is RQQPGGVQEQPGGAQQQGMNESHSGRTVRG.

Belongs to the Nudix hydrolase family. Mg(2+) serves as cofactor.

It carries out the reaction CMP-5'-(N-acetyl-N-hydroxy-3-aminopropyl)phosphonate + H2O = 3-(N-acetyl-N-hydroxy)aminopropylphosphonate + CMP + H(+). It participates in antibiotic biosynthesis. Its function is as follows. Nucleotide hydrolase involved in the biosynthesis of the phosphonate antibiotic FR-900098, a potent antimalarial agent that acts as an inhibitor of 1-deoxy-D-xylulose 5-phosphate reductoisomerase (DXR), the first enzyme in the nonmevalonate pathway for isoprenoid biosynthesis. Catalyzes the hydrolysis of CMP-5'-(N-acetyl-N-hydroxy-3-aminopropyl)phosphonate (CMP-5'-FR-900098) to produce CMP and the final compound FR-900098. In vitro, has broad substrate specificity and also catalyzes the hydrolysis of all the other CMP-containing intermediates within the pathway and shows low activity toward CTP. The sequence is that of CMP-5'-(N-acetyl-N-hydroxy-3-aminopropyl)phosphonate hydrolase from Streptomyces rubellomurinus (strain ATCC 31215).